The following is a 708-amino-acid chain: Glycogen [starch] synthase isoform 1 (708 aa).

UDP is bound at residue arginine 20. Serine 159 is subject to Phosphoserine. Residues histidine 193 and arginine 199 each contribute to the UDP-alpha-D-glucose site. Residues histidine 280, glutamate 281, glutamine 283, histidine 286, and lysine 290 each coordinate alpha-D-glucose 6-phosphate. Residue arginine 320 coordinates UDP. A UDP-alpha-D-glucose-binding site is contributed by arginine 320. Serine 363 bears the Phosphoserine mark. An alpha-D-glucose 6-phosphate-binding site is contributed by histidine 500. Residues glutamate 509, tryptophan 511, and glycine 512 each coordinate UDP-alpha-D-glucose. Threonine 514 contacts UDP. Serine 560 carries the phosphoserine modification. Residues arginine 583 and arginine 587 each coordinate alpha-D-glucose 6-phosphate. Residues serine 651 and serine 655 each carry the phosphoserine modification. A phosphoserine; by PKA mark is found at serine 660 and serine 662. The tract at residues 687–708 is disordered; the sequence is STNGAIDNDDDDNDTSAYYEDN. Residues 693 to 708 are compositionally biased toward acidic residues; the sequence is DNDDDDNDTSAYYEDN.

The protein belongs to the glycosyltransferase 3 family.

The enzyme catalyses [(1-&gt;4)-alpha-D-glucosyl](n) + UDP-alpha-D-glucose = [(1-&gt;4)-alpha-D-glucosyl](n+1) + UDP + H(+). It functions in the pathway glycan biosynthesis; glycogen biosynthesis. Allosteric activation by glucose-6-phosphate, and phosphorylation by a cAMP-dependent kinase. In terms of biological role, glycogen synthase participates in the glycogen biosynthetic process along with glycogenin and glycogen branching enzyme. Extends the primer composed of a few glucose units formed by glycogenin by adding new glucose units to it. In this context, glycogen synthase transfers the glycosyl residue from UDP-Glc to the non-reducing end of alpha-1,4-glucan. This Saccharomyces cerevisiae (strain ATCC 204508 / S288c) (Baker's yeast) protein is Glycogen [starch] synthase isoform 1 (GSY1).